The primary structure comprises 319 residues: Acetyl-coenzyme A carboxylase carboxyl transferase subunit alpha (319 aa).

Residues 35 to 296 enclose the CoA carboxyltransferase C-terminal domain; sequence NLDEEVQRLR…KAQLLADLAD (262 aa).

The protein belongs to the AccA family. As to quaternary structure, acetyl-CoA carboxylase is a heterohexamer composed of biotin carboxyl carrier protein (AccB), biotin carboxylase (AccC) and two subunits each of ACCase subunit alpha (AccA) and ACCase subunit beta (AccD).

Its subcellular location is the cytoplasm. The enzyme catalyses N(6)-carboxybiotinyl-L-lysyl-[protein] + acetyl-CoA = N(6)-biotinyl-L-lysyl-[protein] + malonyl-CoA. The protein operates within lipid metabolism; malonyl-CoA biosynthesis; malonyl-CoA from acetyl-CoA: step 1/1. In terms of biological role, component of the acetyl coenzyme A carboxylase (ACC) complex. First, biotin carboxylase catalyzes the carboxylation of biotin on its carrier protein (BCCP) and then the CO(2) group is transferred by the carboxyltransferase to acetyl-CoA to form malonyl-CoA. This is Acetyl-coenzyme A carboxylase carboxyl transferase subunit alpha from Erwinia tasmaniensis (strain DSM 17950 / CFBP 7177 / CIP 109463 / NCPPB 4357 / Et1/99).